The chain runs to 288 residues: Zinc finger protein 42 (288 aa).

2 stretches are compositionally biased toward basic and acidic residues: residues 1-11 (MNEQKMNEQMK) and 26-38 (ALDRLTLKQDEAR). The disordered stretch occupies residues 1 to 48 (MNEQKMNEQMKKTAKTSGQKGPGGRALDRLTLKQDEARPVQNTRVEAP). 4 consecutive C2H2-type zinc fingers follow at residues 170–194 (LECPQAGCKKKLRGKTALRKHMLVH), 199–221 (HVCAECGKAFTESSKLKRHFLVH), 227–251 (YQCTFEGCGKRFSLDFNLRTHIRIH), and 258–281 (VCPFDGCEKSFIQSNNQKIHILTH). Glycyl lysine isopeptide (Lys-Gly) (interchain with G-Cter in ubiquitin) cross-links involve residues K213 and K215.

This sequence belongs to the krueppel C2H2-type zinc-finger protein family. In terms of processing, polyubiquitinated by RNF12, leading to proteasomal degradation. As to expression, restricted to testis, to germ cells in the early stages of spermatogenesis. Not expressed in spermatids, nor spermatozoa. Expressed in embryonic stem (ES) cells.

Its subcellular location is the nucleus. Functionally, involved in the reprogramming of X-chromosome inactivation during the acquisition of pluripotency. Required for efficient elongation of TSIX, a non-coding RNA antisense to XIST. Binds DXPas34 enhancer within the TSIX promoter. Involved in ES cell self-renewal. The sequence is that of Zinc finger protein 42 (Zfp42) from Mus musculus (Mouse).